A 491-amino-acid chain; its full sequence is uncharacterized protein (491 aa).

267–274 (GIQGTGKS) lines the ATP pocket.

It belongs to the AAA ATPase family. Highly divergent.

It is found in the plastid. The protein resides in the chloroplast. This is an uncharacterized protein from Gracilaria tenuistipitata var. liui (Red alga).